The following is a 1080-amino-acid chain: Origin recognition complex subunit 3 (1080 aa).

Disordered stretches follow at residues 92 to 112 (YGIS…DDSS), 566 to 701 (TIKL…PKRI), and 869 to 902 (IKNE…ENEQ). The segment covering 651 to 661 (IKSDLECNDND) has biased composition (basic and acidic residues). A compositionally biased stretch (acidic residues) spans 662–671 (KDNDDNDNDI). Low complexity-rich tracts occupy residues 672–688 (NENN…NSNN) and 875–896 (QQQQ…QQQQ).

Belongs to the ORC3 family. As to quaternary structure, ORC is composed of six subunits.

Its subcellular location is the nucleus. Its function is as follows. Component of the origin recognition complex (ORC) that binds origins of replication. DNA-binding is ATP-dependent, however specific DNA sequences that define origins of replication have not been identified so far. ORC is required to assemble the pre-replication complex necessary to initiate DNA replication. This Dictyostelium discoideum (Social amoeba) protein is Origin recognition complex subunit 3 (orcC).